The sequence spans 350 residues: Dihydroorotase (350 aa).

The Zn(2+) site is built by histidine 17 and histidine 19. Substrate contacts are provided by residues 19–21 (HFR) and asparagine 45. The Zn(2+) site is built by lysine 103, histidine 140, and histidine 178. At lysine 103 the chain carries N6-carboxylysine. Position 140 (histidine 140) interacts with substrate. Position 223 (leucine 223) interacts with substrate. Position 251 (aspartate 251) interacts with Zn(2+). Aspartate 251 is a catalytic residue. Residues histidine 255 and alanine 267 each contribute to the substrate site.

The protein belongs to the metallo-dependent hydrolases superfamily. DHOase family. Class II DHOase subfamily. In terms of assembly, homodimer. The cofactor is Zn(2+).

It carries out the reaction (S)-dihydroorotate + H2O = N-carbamoyl-L-aspartate + H(+). The protein operates within pyrimidine metabolism; UMP biosynthesis via de novo pathway; (S)-dihydroorotate from bicarbonate: step 3/3. Its function is as follows. Catalyzes the reversible cyclization of carbamoyl aspartate to dihydroorotate. The polypeptide is Dihydroorotase (Photorhabdus laumondii subsp. laumondii (strain DSM 15139 / CIP 105565 / TT01) (Photorhabdus luminescens subsp. laumondii)).